The primary structure comprises 306 residues: N-acetylmuramic acid 6-phosphate etherase (306 aa).

The 164-residue stretch at 55 to 218 (AAATLLAGGR…STGAMIKIGK (164 aa)) folds into the SIS domain. The Proton donor role is filled by Glu83. The active site involves Glu114.

The protein belongs to the GCKR-like family. MurNAc-6-P etherase subfamily. Homodimer.

It carries out the reaction N-acetyl-D-muramate 6-phosphate + H2O = N-acetyl-D-glucosamine 6-phosphate + (R)-lactate. It functions in the pathway amino-sugar metabolism; 1,6-anhydro-N-acetylmuramate degradation. Its pathway is amino-sugar metabolism; N-acetylmuramate degradation. The protein operates within cell wall biogenesis; peptidoglycan recycling. Its function is as follows. Specifically catalyzes the cleavage of the D-lactyl ether substituent of MurNAc 6-phosphate, producing GlcNAc 6-phosphate and D-lactate. Together with AnmK, is also required for the utilization of anhydro-N-acetylmuramic acid (anhMurNAc) either imported from the medium or derived from its own cell wall murein, and thus plays a role in cell wall recycling. The sequence is that of N-acetylmuramic acid 6-phosphate etherase from Erwinia tasmaniensis (strain DSM 17950 / CFBP 7177 / CIP 109463 / NCPPB 4357 / Et1/99).